The sequence spans 246 residues: Aliphatic sulfonates import ATP-binding protein SsuB 2 (246 aa).

The 215-residue stretch at 4-218 (VTVRGLRRAF…RRDPRFEQAR (215 aa)) folds into the ABC transporter domain. 36–43 (GRSGGGKT) serves as a coordination point for ATP.

Belongs to the ABC transporter superfamily. Aliphatic sulfonates importer (TC 3.A.1.17.2) family. As to quaternary structure, the complex is composed of two ATP-binding proteins (SsuB), two transmembrane proteins (SsuC) and a solute-binding protein (SsuA).

Its subcellular location is the cell membrane. It carries out the reaction ATP + H2O + aliphatic sulfonate-[sulfonate-binding protein]Side 1 = ADP + phosphate + aliphatic sulfonateSide 2 + [sulfonate-binding protein]Side 1.. Its function is as follows. Part of the ABC transporter complex SsuABC involved in aliphatic sulfonates import. Responsible for energy coupling to the transport system. This Frankia alni (strain DSM 45986 / CECT 9034 / ACN14a) protein is Aliphatic sulfonates import ATP-binding protein SsuB 2.